The primary structure comprises 142 residues: Type IV pilus subunit protein TapA (142 aa).

Residues 1–6 constitute a propeptide, leader sequence; it reads MKKQSG. The residue at position 7 (F7) is an N-methylphenylalanine. Residues 7-27 form a helical membrane-spanning segment; sequence FTLIELMIVVAIVAILAAIAL.

It belongs to the N-Me-Phe pilin family.

Its subcellular location is the membrane. In terms of biological role, major component of the type IV (TAP) pilus. Aeromonas hydrophila possesses two distinct families of type IV pili: the bundle-forming pilus (Bfp) and the type IV pilus (Tap). The protein is Type IV pilus subunit protein TapA (tapA) of Aeromonas hydrophila.